The following is a 447-amino-acid chain: Dirigent protein 10 (447 aa).

Positions 1-21 (MAGQKILSLLVIALVVTFAAA) are cleaved as a signal peptide. Residues 74–85 (SGSTGSGLGAGT) are compositionally biased toward gly residues. The disordered stretch occupies residues 74 to 123 (SGSTGSGLGAGTGSIPSSGSGPGLLPTASSVPGSLAGGGSGSLPTTGSAT). The span at 86 to 107 (GSIPSSGSGPGLLPTASSVPGS) shows a compositional bias: low complexity.

The protein belongs to the plant dirigent protein family. Homodimer. In terms of tissue distribution, in roots, mostly detected in root endodermis and quiescent center, and, to a lower extent, in root stele and cortex. Expressed in root vascular cylinder, flowers, siliques, cotyledon and leaf veins, and leaf margins. Present in the basal region of rosette leaf trichomes and in developing xylem.

The protein localises to the secreted. Its subcellular location is the extracellular space. It is found in the apoplast. Dirigent proteins impart stereoselectivity on the phenoxy radical-coupling reaction, yielding optically active lignans from two molecules of coniferyl alcohol in the biosynthesis of lignans, flavonolignans, and alkaloids and thus plays a central role in plant secondary metabolism. Regulates suberin accumulation in roots. The polypeptide is Dirigent protein 10 (DIR10) (Arabidopsis thaliana (Mouse-ear cress)).